Reading from the N-terminus, the 434-residue chain is Nicotinate phosphoribosyltransferase (434 aa).

His242 bears the Phosphohistidine; by autocatalysis mark.

Belongs to the NAPRTase family. Post-translationally, transiently phosphorylated on a His residue during the reaction cycle. Phosphorylation strongly increases the affinity for substrates and increases the rate of nicotinate D-ribonucleotide production. Dephosphorylation regenerates the low-affinity form of the enzyme, leading to product release.

It carries out the reaction nicotinate + 5-phospho-alpha-D-ribose 1-diphosphate + ATP + H2O = nicotinate beta-D-ribonucleotide + ADP + phosphate + diphosphate. Its pathway is cofactor biosynthesis; NAD(+) biosynthesis; nicotinate D-ribonucleotide from nicotinate: step 1/1. Catalyzes the synthesis of beta-nicotinate D-ribonucleotide from nicotinate and 5-phospho-D-ribose 1-phosphate at the expense of ATP. This Brucella anthropi (strain ATCC 49188 / DSM 6882 / CCUG 24695 / JCM 21032 / LMG 3331 / NBRC 15819 / NCTC 12168 / Alc 37) (Ochrobactrum anthropi) protein is Nicotinate phosphoribosyltransferase.